The primary structure comprises 234 residues: Leucyl/phenylalanyl-tRNA--protein transferase (234 aa).

This sequence belongs to the L/F-transferase family.

Its subcellular location is the cytoplasm. The enzyme catalyses N-terminal L-lysyl-[protein] + L-leucyl-tRNA(Leu) = N-terminal L-leucyl-L-lysyl-[protein] + tRNA(Leu) + H(+). It catalyses the reaction N-terminal L-arginyl-[protein] + L-leucyl-tRNA(Leu) = N-terminal L-leucyl-L-arginyl-[protein] + tRNA(Leu) + H(+). It carries out the reaction L-phenylalanyl-tRNA(Phe) + an N-terminal L-alpha-aminoacyl-[protein] = an N-terminal L-phenylalanyl-L-alpha-aminoacyl-[protein] + tRNA(Phe). Functions in the N-end rule pathway of protein degradation where it conjugates Leu, Phe and, less efficiently, Met from aminoacyl-tRNAs to the N-termini of proteins containing an N-terminal arginine or lysine. This chain is Leucyl/phenylalanyl-tRNA--protein transferase, found in Dechloromonas aromatica (strain RCB).